A 111-amino-acid chain; its full sequence is Universal stress protein B (111 aa).

2 helical membrane-spanning segments follow: residues 1 to 21 and 90 to 110; these read MIST…NMAR and FILT…LMIW.

This sequence belongs to the universal stress protein B family.

It localises to the cell inner membrane. The chain is Universal stress protein B from Klebsiella pneumoniae (strain 342).